We begin with the raw amino-acid sequence, 232 residues long: BTB/POZ domain-containing protein KCTD11 (232 aa).

Positions 1 to 49 constitute a BTB domain; sequence MLGAMFRAGTPMTPNLNPEGGGHYFIDRDGKAFRHILNFLRLGRLDLPL.

Homopentamer. Interacts with KCTD6 and KCTD21; KCTD11 and KCTD6 or KCTD21 may associate in pentameric assemblies. Component of the BCR(KCTD11) E3 ubiquitin ligase complex, at least composed of CUL3 and KCTD11 and RBX1. Interacts (via BTB domain) with CUL3; initially a 4:4 stoichiometry has been reported, however, electron microscopy revealed pentameric states of the BTB domain.

It participates in protein modification; protein ubiquitination. Plays a role as a marker and a regulator of neuronal differentiation; Up-regulated by a variety of neurogenic signals, such as retinoic acid, epidermal growth factor/EGF and NGFB/nerve growth factor. Induces apoptosis, growth arrest and the expression of cyclin-dependent kinase inhibitor CDKN1B. Plays a role as a tumor repressor and inhibits cell growth and tumorigenicity of medulloblastoma (MDB). Acts as a probable substrate-specific adapter for a BCR (BTB-CUL3-RBX1) E3 ubiquitin-protein ligase complex towards HDAC1. Functions as antagonist of the Hedgehog pathway on cell proliferation and differentiation by affecting the nuclear transfer of transcription factor GLI1, thus maintaining cerebellar granule cells in undifferentiated state, this effect probably occurs via HDAC1 down-regulation, keeping GLI1 acetylated and inactive. This is BTB/POZ domain-containing protein KCTD11 (KCTD11) from Bos taurus (Bovine).